Consider the following 1637-residue polypeptide: Probable serine/threonine-protein kinase gdt2 (1637 aa).

An N-terminal signal peptide occupies residues M1–T19. Residues F20–P896 lie on the Extracellular side of the membrane. The chain crosses the membrane as a helical span at residues I897–G917. Topologically, residues A918–N1637 are cytoplasmic. The segment covering S977–P990 has biased composition (polar residues). The interval S977–T1000 is disordered. Over residues T991–T1000 the composition is skewed to low complexity. One can recognise a Protein kinase domain in the interval I1290–K1547. Residues I1296 to V1304 and K1317 contribute to the ATP site. The active-site Proton acceptor is D1408. A disordered region spans residues D1557–N1637. 2 stretches are compositionally biased toward low complexity: residues N1568–N1589 and N1597–N1637.

This sequence in the N-terminal section; belongs to the GDT family. It in the C-terminal section; belongs to the protein kinase superfamily. TKL Ser/Thr protein kinase family.

The protein localises to the membrane. The catalysed reaction is L-seryl-[protein] + ATP = O-phospho-L-seryl-[protein] + ADP + H(+). It carries out the reaction L-threonyl-[protein] + ATP = O-phospho-L-threonyl-[protein] + ADP + H(+). In terms of biological role, regulates the transition between growth and differentiation. This chain is Probable serine/threonine-protein kinase gdt2 (gdt2), found in Dictyostelium discoideum (Social amoeba).